The sequence spans 124 residues: Probable glycine cleavage system H protein (124 aa).

Residues 23–104 (VATVGITDYA…PYKNWLVKIR (82 aa)) enclose the Lipoyl-binding domain. Lys-64 carries the N6-lipoyllysine modification.

It belongs to the GcvH family. As to quaternary structure, the glycine cleavage system is composed of four proteins: P, T, L and H. The cofactor is (R)-lipoate.

In terms of biological role, the glycine cleavage system catalyzes the degradation of glycine. The H protein shuttles the methylamine group of glycine from the P protein to the T protein. The chain is Probable glycine cleavage system H protein from Picrophilus torridus (strain ATCC 700027 / DSM 9790 / JCM 10055 / NBRC 100828 / KAW 2/3).